The primary structure comprises 231 residues: Superoxide dismutase [Mn], mitochondrial (231 aa).

Residues 1-27 (MALRTLASRKTLAAAALPLAAAAAARG) constitute a mitochondrion transit peptide. His-55, His-103, Asp-192, and His-196 together coordinate Mn(2+).

It belongs to the iron/manganese superoxide dismutase family. In terms of assembly, homotetramer. Mn(2+) is required as a cofactor.

The protein resides in the mitochondrion matrix. The catalysed reaction is 2 superoxide + 2 H(+) = H2O2 + O2. Destroys superoxide anion radicals which are normally produced within the cells and which are toxic to biological systems. This chain is Superoxide dismutase [Mn], mitochondrial (SODA), found in Oryza sativa subsp. japonica (Rice).